Here is a 521-residue protein sequence, read N- to C-terminus: GMP synthase [glutamine-hydrolyzing] (521 aa).

The 193-residue stretch at 5–197 (KILILDFGSQ…VLDICGAQPG (193 aa)) folds into the Glutamine amidotransferase type-1 domain. The Nucleophile role is filled by Cys-81. Catalysis depends on residues His-171 and Glu-173. One can recognise a GMPS ATP-PPase domain in the interval 198-390 (WTMPNYIEEA…LGLPREMVYR (193 aa)). Residue 225 to 231 (SGGVDSS) participates in ATP binding.

Homodimer.

It carries out the reaction XMP + L-glutamine + ATP + H2O = GMP + L-glutamate + AMP + diphosphate + 2 H(+). The protein operates within purine metabolism; GMP biosynthesis; GMP from XMP (L-Gln route): step 1/1. Catalyzes the synthesis of GMP from XMP. The chain is GMP synthase [glutamine-hydrolyzing] from Neisseria meningitidis serogroup C (strain 053442).